The sequence spans 253 residues: Tryptophan synthase alpha chain (253 aa).

Active-site proton acceptor residues include Glu45 and Asp56.

This sequence belongs to the TrpA family. As to quaternary structure, tetramer of two alpha and two beta chains.

It catalyses the reaction (1S,2R)-1-C-(indol-3-yl)glycerol 3-phosphate + L-serine = D-glyceraldehyde 3-phosphate + L-tryptophan + H2O. It functions in the pathway amino-acid biosynthesis; L-tryptophan biosynthesis; L-tryptophan from chorismate: step 5/5. Its function is as follows. The alpha subunit is responsible for the aldol cleavage of indoleglycerol phosphate to indole and glyceraldehyde 3-phosphate. The polypeptide is Tryptophan synthase alpha chain (Flavobacterium johnsoniae (strain ATCC 17061 / DSM 2064 / JCM 8514 / BCRC 14874 / CCUG 350202 / NBRC 14942 / NCIMB 11054 / UW101) (Cytophaga johnsonae)).